Here is a 133-residue protein sequence, read N- to C-terminus: MGFYQGPDNRKITGGLKGKHRDKRKYEIGNPPTFTTLSAEDIRIKDRTLGGNFKVRLKYTTTANVLDPATNTAKKVKILEILETPANKELARRGIIIRGAKIRTEAGLAVVTSRPGQDGVINAVLLKNESQRS.

The disordered stretch occupies residues 1–31 (MGFYQGPDNRKITGGLKGKHRDKRKYEIGNP).

Belongs to the eukaryotic ribosomal protein eS8 family. Part of the 30S ribosomal subunit.

This Saccharolobus solfataricus (strain ATCC 35092 / DSM 1617 / JCM 11322 / P2) (Sulfolobus solfataricus) protein is Small ribosomal subunit protein eS8.